A 150-amino-acid polypeptide reads, in one-letter code: MQIILLEKVVNLGNLGDVVRVKDGYARNFLIPNKQARRATDSAIKEFEARRAELEKLAAEKLAAAQAEGEKLNGLTLQLSQKAGVDGRLFGSVTNHDIADALVAQGFKVEKAQVRMPNGPLKTVGDHPVVVSLHTDVAVDVTVLVQGDAV.

Belongs to the bacterial ribosomal protein bL9 family.

In terms of biological role, binds to the 23S rRNA. This Ralstonia pickettii (strain 12J) protein is Large ribosomal subunit protein bL9.